A 382-amino-acid chain; its full sequence is Intermediate transcription factor 3 large subunit (382 aa).

This sequence belongs to the poxviruses A23 family. In terms of assembly, heterodimer of a 45 kDa and a 32 kDa subunit.

Its function is as follows. Acts with RNA polymerase to initiate transcription from intermediate gene promoters. The chain is Intermediate transcription factor 3 large subunit (VITF3L) from Camelus.